Consider the following 92-residue polypeptide: MARSTWKGPFVDGYLLKKAEKSRESGKNEVIKIWSRRSTILPQFVGLTFGVYNGKKHVPVNVTEEMIGQKFGEYSPTRTYYGHAADKKAKRK.

Belongs to the universal ribosomal protein uS19 family.

Protein S19 forms a complex with S13 that binds strongly to the 16S ribosomal RNA. The protein is Small ribosomal subunit protein uS19 of Cereibacter sphaeroides (strain ATCC 17029 / ATH 2.4.9) (Rhodobacter sphaeroides).